Reading from the N-terminus, the 231-residue chain is MRIAVIGAMEEEVRILRDKLEQAETETVAGCEFTKGLLAGHEVILLKSGIGKVNAAMSTTILLEKYKPEKVINTGSAGGFHHSLNVGDVVISTEVRHHDVDVTAFNYEYGQVPGMPPGFKADEALVALAEKCMQAEENIQVVKGMIATGDSFMSDPNRVAAIRDKFENLYAVEMEAAAVAQVCHQYEIPFVIIRALSDIAGKESNVSFDQFLDQAALHSTNFIVKVLEELK.

Glutamate 12 (proton acceptor) is an active-site residue. Residues glycine 78, methionine 153, and 174–175 contribute to the substrate site; that span reads ME. Aspartate 198 serves as the catalytic Proton donor.

The protein belongs to the PNP/UDP phosphorylase family. MtnN subfamily.

The enzyme catalyses S-adenosyl-L-homocysteine + H2O = S-(5-deoxy-D-ribos-5-yl)-L-homocysteine + adenine. The catalysed reaction is S-methyl-5'-thioadenosine + H2O = 5-(methylsulfanyl)-D-ribose + adenine. It catalyses the reaction 5'-deoxyadenosine + H2O = 5-deoxy-D-ribose + adenine. It participates in amino-acid biosynthesis; L-methionine biosynthesis via salvage pathway; S-methyl-5-thio-alpha-D-ribose 1-phosphate from S-methyl-5'-thioadenosine (hydrolase route): step 1/2. Functionally, catalyzes the irreversible cleavage of the glycosidic bond in both 5'-methylthioadenosine (MTA) and S-adenosylhomocysteine (SAH/AdoHcy) to adenine and the corresponding thioribose, 5'-methylthioribose and S-ribosylhomocysteine, respectively. Also cleaves 5'-deoxyadenosine, a toxic by-product of radical S-adenosylmethionine (SAM) enzymes, into 5-deoxyribose and adenine. The sequence is that of 5'-methylthioadenosine/S-adenosylhomocysteine nucleosidase from Bacillus cereus (strain B4264).